A 102-amino-acid chain; its full sequence is Large ribosomal subunit protein uL24 (102 aa).

This sequence belongs to the universal ribosomal protein uL24 family. As to quaternary structure, part of the 50S ribosomal subunit.

Functionally, one of two assembly initiator proteins, it binds directly to the 5'-end of the 23S rRNA, where it nucleates assembly of the 50S subunit. One of the proteins that surrounds the polypeptide exit tunnel on the outside of the subunit. This chain is Large ribosomal subunit protein uL24, found in Rhizobium johnstonii (strain DSM 114642 / LMG 32736 / 3841) (Rhizobium leguminosarum bv. viciae).